The primary structure comprises 274 residues: NH(3)-dependent NAD(+) synthetase (274 aa).

46-53 lines the ATP pocket; sequence GISGGQDS. D52 serves as a coordination point for Mg(2+). R140 provides a ligand contact to deamido-NAD(+). T160 contributes to the ATP binding site. Residue E165 coordinates Mg(2+). Deamido-NAD(+) is bound by residues K173 and D180. Residues K189 and T211 each contribute to the ATP site. 260–261 is a binding site for deamido-NAD(+); it reads HK.

This sequence belongs to the NAD synthetase family. As to quaternary structure, homodimer.

It catalyses the reaction deamido-NAD(+) + NH4(+) + ATP = AMP + diphosphate + NAD(+) + H(+). Its pathway is cofactor biosynthesis; NAD(+) biosynthesis; NAD(+) from deamido-NAD(+) (ammonia route): step 1/1. Its function is as follows. Catalyzes the ATP-dependent amidation of deamido-NAD to form NAD. Uses ammonia as a nitrogen source. The sequence is that of NH(3)-dependent NAD(+) synthetase from Streptococcus pyogenes serotype M18 (strain MGAS8232).